Reading from the N-terminus, the 330-residue chain is Phosphate acyltransferase (330 aa).

The protein belongs to the PlsX family. In terms of assembly, homodimer. Probably interacts with PlsY.

It is found in the cytoplasm. It catalyses the reaction a fatty acyl-[ACP] + phosphate = an acyl phosphate + holo-[ACP]. The protein operates within lipid metabolism; phospholipid metabolism. Functionally, catalyzes the reversible formation of acyl-phosphate (acyl-PO(4)) from acyl-[acyl-carrier-protein] (acyl-ACP). This enzyme utilizes acyl-ACP as fatty acyl donor, but not acyl-CoA. The polypeptide is Phosphate acyltransferase (Carboxydothermus hydrogenoformans (strain ATCC BAA-161 / DSM 6008 / Z-2901)).